The sequence spans 960 residues: Phosphoenolpyruvate carboxylase 2 (960 aa).

Active-site residues include H167 and K595.

The protein belongs to the PEPCase type 1 family. Homotetramer. Mg(2+) is required as a cofactor.

Its subcellular location is the cytoplasm. It catalyses the reaction oxaloacetate + phosphate = phosphoenolpyruvate + hydrogencarbonate. It functions in the pathway photosynthesis; C3 acid pathway. Through the carboxylation of phosphoenolpyruvate (PEP) it forms oxaloacetate, a four-carbon dicarboxylic acid source for the tricarboxylic acid cycle. In Sorghum bicolor (Sorghum), this protein is Phosphoenolpyruvate carboxylase 2.